The following is a 511-amino-acid chain: 2-isopropylmalate synthase (511 aa).

In terms of domain architecture, Pyruvate carboxyltransferase spans 6 to 269; it reads IIIFDTTLRD…YTDIKCENIF (264 aa). Residues aspartate 15, histidine 203, histidine 205, and asparagine 239 each coordinate Mn(2+). The segment at 394-511 is regulatory domain; sequence VIEKLSVISG…SLKVEERKMA (118 aa).

The protein belongs to the alpha-IPM synthase/homocitrate synthase family. LeuA type 1 subfamily. As to quaternary structure, homodimer. It depends on Mn(2+) as a cofactor.

Its subcellular location is the cytoplasm. It carries out the reaction 3-methyl-2-oxobutanoate + acetyl-CoA + H2O = (2S)-2-isopropylmalate + CoA + H(+). It functions in the pathway amino-acid biosynthesis; L-leucine biosynthesis; L-leucine from 3-methyl-2-oxobutanoate: step 1/4. Functionally, catalyzes the condensation of the acetyl group of acetyl-CoA with 3-methyl-2-oxobutanoate (2-ketoisovalerate) to form 3-carboxy-3-hydroxy-4-methylpentanoate (2-isopropylmalate). The chain is 2-isopropylmalate synthase from Campylobacter jejuni (strain RM1221).